The following is a 328-amino-acid chain: P2Y purinoceptor 6 (328 aa).

The Extracellular segment spans residues 1–27; the sequence is MEWDNGTGQALGLPPTTCVYRENFKQL. N-linked (GlcNAc...) asparagine glycosylation occurs at N5. Residues 28-48 traverse the membrane as a helical segment; that stretch reads LLPPVYSAVLAAGLPLNICVI. At 49–62 the chain is on the cytoplasmic side; it reads TQICTSRRALTRTA. The helical transmembrane segment at 63–83 threads the bilayer; it reads VYTLNLALADLLYACSLPLLI. Over 84–101 the chain is Extracellular; that stretch reads YNYAQGDHWPFGDFACRL. Cysteines 99 and 177 form a disulfide. Residues 102–122 traverse the membrane as a helical segment; the sequence is VRFLFYANLHGSILFLTCISF. Over 123 to 144 the chain is Cytoplasmic; that stretch reads QRYLGICHPLAPWHKRGGRRAA. Residues 145–165 form a helical membrane-spanning segment; it reads WLVCVAVWLAVTTQCLPTAIF. At 166 to 194 the chain is on the extracellular side; it reads AATGIQRNRTVCYDLSPPALATHYMPYGM. A helical transmembrane segment spans residues 195–215; that stretch reads ALTVIGFLLPFAALLACYCLL. Over 216–236 the chain is Cytoplasmic; the sequence is ACRLCRQDGPAEPVAQERRGK. A helical transmembrane segment spans residues 237–257; it reads AARMAVVVAAAFAISFLPFHI. Over 258 to 280 the chain is Extracellular; it reads TKTAYLAVRSTPGVPCTVLEAFA. Residues 281–303 traverse the membrane as a helical segment; sequence AAYKGTRPFASANSVLDPILFYF. The Cytoplasmic segment spans residues 304–328; sequence TQKKFRRRPHELLQKLTAKWQRQGR.

It belongs to the G-protein coupled receptor 1 family.

Its subcellular location is the cell membrane. Its function is as follows. Receptor for extracellular UDP &gt; UTP &gt; ATP. The activity of this receptor is mediated by G proteins which activate a phosphatidylinositol-calcium second messenger system. The chain is P2Y purinoceptor 6 (P2RY6) from Homo sapiens (Human).